We begin with the raw amino-acid sequence, 703 residues long: Prolyl 3-hydroxylase 2 (703 aa).

An N-terminal signal peptide occupies residues methionine 1–glycine 21. Residues proline 18–glutamine 40 are disordered. TPR repeat units lie at residues phenylalanine 42–leucine 75, arginine 144–histidine 177, histidine 205–glutamate 238, and proline 301–aspartate 334. N-linked (GlcNAc...) asparagine glycans are attached at residues asparagine 444, asparagine 455, and asparagine 544. The Fe2OG dioxygenase domain maps to threonine 552–leucine 666. Fe cation is bound by residues histidine 575, aspartate 577, and histidine 647. Residue arginine 657 is part of the active site. A Prevents secretion from ER motif is present at residues lysine 700–leucine 703.

The protein belongs to the leprecan family. The cofactor is Fe cation. Requires L-ascorbate as cofactor. Detected at low levels in cartilage.

Its subcellular location is the endoplasmic reticulum. It localises to the sarcoplasmic reticulum. The protein localises to the golgi apparatus. It catalyses the reaction L-prolyl-[collagen] + 2-oxoglutarate + O2 = trans-3-hydroxy-L-prolyl-[collagen] + succinate + CO2. Functionally, prolyl 3-hydroxylase that catalyzes the post-translational formation of 3-hydroxyproline on collagens. Contributes to proline 3-hydroxylation of collagen COL4A1 and COL1A1 in tendons, the eye sclera and in the eye lens capsule. Has high activity with the type IV collagen COL4A1, and lower activity with COL1A1. Catalyzes hydroxylation of the first Pro in Gly-Pro-Hyp sequences where Hyp is 4-hydroxyproline. Has no activity on substrates that lack 4-hydroxyproline in the third position. The sequence is that of Prolyl 3-hydroxylase 2 from Rattus norvegicus (Rat).